Consider the following 116-residue polypeptide: MYKQVIVVRGDLKLSRGKLAAQVAHASLGAFLRAKESGAPVEEWLREGQKKVVLKCKDKEELLELHELAKRRGLPSFLVRDAGLTELEPGTVTCLGIGPEREEEIDRVTGDLPLLR.

It belongs to the PTH2 family.

It is found in the cytoplasm. It carries out the reaction an N-acyl-L-alpha-aminoacyl-tRNA + H2O = an N-acyl-L-amino acid + a tRNA + H(+). Functionally, the natural substrate for this enzyme may be peptidyl-tRNAs which drop off the ribosome during protein synthesis. This chain is Peptidyl-tRNA hydrolase, found in Methanopyrus kandleri (strain AV19 / DSM 6324 / JCM 9639 / NBRC 100938).